Consider the following 420-residue polypeptide: D-tagatose-1,6-bisphosphate aldolase subunit GatZ (420 aa).

Belongs to the GatZ/KbaZ family. GatZ subfamily. Forms a complex with GatY.

Its pathway is carbohydrate metabolism; D-tagatose 6-phosphate degradation; D-glyceraldehyde 3-phosphate and glycerone phosphate from D-tagatose 6-phosphate: step 2/2. In terms of biological role, component of the tagatose-1,6-bisphosphate aldolase GatYZ that is required for full activity and stability of the Y subunit. Could have a chaperone-like function for the proper and stable folding of GatY. When expressed alone, GatZ does not show any aldolase activity. Is involved in the catabolism of galactitol. In Escherichia coli O157:H7, this protein is D-tagatose-1,6-bisphosphate aldolase subunit GatZ (gatZ).